A 230-amino-acid polypeptide reads, in one-letter code: Large ribosomal subunit protein uL4 (230 aa).

The disordered stretch occupies residues 51 to 105 (RAAARQGTHSTKTRGDVSGGGRKPYRQKGTGRARQGSMRAPQFTGGGIVHGPKLR).

This sequence belongs to the universal ribosomal protein uL4 family. Part of the 50S ribosomal subunit.

Functionally, one of the primary rRNA binding proteins, this protein initially binds near the 5'-end of the 23S rRNA. It is important during the early stages of 50S assembly. It makes multiple contacts with different domains of the 23S rRNA in the assembled 50S subunit and ribosome. Forms part of the polypeptide exit tunnel. The polypeptide is Large ribosomal subunit protein uL4 (Mycobacterium leprae (strain Br4923)).